A 254-amino-acid polypeptide reads, in one-letter code: Protein N-terminal and lysine N-methyltransferase EFM7 (254 aa).

S-adenosyl-L-methionine-binding positions include W57, 84-86, D106, W138, and S165; that span reads GAA.

It belongs to the class I-like SAM-binding methyltransferase superfamily. EFM7 family.

It is found in the cytoplasm. In terms of biological role, S-adenosyl-L-methionine-dependent protein methyltransferase that trimethylates the N-terminal glycine 'Gly-2' of elongation factor 1-alpha, before also catalyzing the mono- and dimethylation of 'Lys-3'. The protein is Protein N-terminal and lysine N-methyltransferase EFM7 of Debaryomyces hansenii (strain ATCC 36239 / CBS 767 / BCRC 21394 / JCM 1990 / NBRC 0083 / IGC 2968) (Yeast).